Here is a 502-residue protein sequence, read N- to C-terminus: Putative ZDHHC-type palmitoyltransferase 3 (502 aa).

Residues 1–80 are disordered; it reads MVNNNNKNNK…ESTNENNKKL (80 aa). A compositionally biased stretch (basic and acidic residues) spans 10–30; the sequence is KINDRENEENEKNKKKDKIYE. The segment covering 31 to 52 has biased composition (low complexity); that stretch reads NKIGINENNNENNNYQNENFIY. N-linked (GlcNAc...) asparagine glycosylation is present at Asn-58. Positions 59–73 are enriched in acidic residues; it reads DTQEGDISEIQEEST. Transmembrane regions (helical) follow at residues 104–124 and 134–154; these read FFIV…IKLV and LEIS…YNLY. Positions 200-281 are disordered; it reads IANDDPISSS…NNNNNNNKNQ (82 aa). The segment covering 203–212 has biased composition (low complexity); the sequence is DDPISSSSDF. The span at 213 to 222 shows a compositional bias: acidic residues; sequence SDSDDDDQDE. The span at 248–280 shows a compositional bias: low complexity; sequence NSNNNNSNNNNNNNKNRNRNNNNNNNNNNNNKN. 2 N-linked (GlcNAc...) asparagine glycosylation sites follow: Asn-252 and Asn-280. In terms of domain architecture, DHHC spans 299–349; that stretch reads KFCITCGLYREPRSFHCSTCNNCVENFDHHCVWIGNCIGRRNYREFFYFIT. Residue Cys-329 is the S-palmitoyl cysteine intermediate of the active site. A helical membrane pass occupies residues 344–364; it reads FFYFITTTLIYALYLLSMSIV. N-linked (GlcNAc...) asparagine glycans are attached at residues Asn-371, Asn-388, and Asn-393. Residues 419 to 439 traverse the membrane as a helical segment; sequence GLCIFIIIFGFIMSLLLGFLV. N-linked (GlcNAc...) asparagine glycans are attached at residues Asn-449, Asn-483, and Asn-494.

Belongs to the DHHC palmitoyltransferase family.

The protein localises to the membrane. It carries out the reaction L-cysteinyl-[protein] + hexadecanoyl-CoA = S-hexadecanoyl-L-cysteinyl-[protein] + CoA. This chain is Putative ZDHHC-type palmitoyltransferase 3, found in Dictyostelium discoideum (Social amoeba).